The following is a 185-amino-acid chain: Phospholipase A2 inhibitor 25 kDa subunit (185 aa).

Intrachain disulfides connect Cys-3–Cys-27, Cys-6–Cys-13, Cys-20–Cys-48, Cys-54–Cys-75, Cys-76–Cys-81, Cys-101–Cys-126, Cys-119–Cys-146, and Cys-152–Cys-172.

The protein belongs to the CNF-like-inhibitor family. Heterodimer with phospholipase A2 inhibitor 31 kDa. In terms of tissue distribution, expressed by the liver.

It is found in the secreted. Functionally, inhibits the enzymatic activity of phospholipase A2. The chain is Phospholipase A2 inhibitor 25 kDa subunit from Naja kaouthia (Monocled cobra).